We begin with the raw amino-acid sequence, 203 residues long: GTP cyclohydrolase 1 (203 aa).

Cys-87, His-90, and Cys-158 together coordinate Zn(2+).

The protein belongs to the GTP cyclohydrolase I family. As to quaternary structure, homomer.

The catalysed reaction is GTP + H2O = 7,8-dihydroneopterin 3'-triphosphate + formate + H(+). The protein operates within cofactor biosynthesis; 7,8-dihydroneopterin triphosphate biosynthesis; 7,8-dihydroneopterin triphosphate from GTP: step 1/1. The protein is GTP cyclohydrolase 1 of Xylella fastidiosa (strain M23).